A 301-amino-acid polypeptide reads, in one-letter code: Syntaxin-17 (301 aa).

Ser2 carries the post-translational modification N-acetylserine. Topologically, residues 2-227 are cytoplasmic; the sequence is SEDEEKVKLR…KNLQKAAKYK (226 aa). Position 41 is an N6-acetyllysine (Lys41). A coiled-coil region spans residues 49 to 128; it reads DKLHEEHINA…QVNDEELLQP (80 aa). Phosphotyrosine; by ABL1 is present on Tyr156. The 63-residue stretch at 161 to 223 folds into the t-SNARE coiled-coil homology domain; sequence IPQDQNAAES…EEGTKNLQKA (63 aa). The helical transmembrane segment at 228–248 threads the bilayer; sequence LAALPVAGALIGGVVGGPIGL. A necessary and sufficient for localization to autophagosome region spans residues 228–274; the sequence is LAALPVAGALIGGVVGGPIGLLAGFKVAGIAAALGGGVLGFTGGKLI. The Lumenal portion of the chain corresponds to 249–253; it reads LAGFK. A helical membrane pass occupies residues 254–274; the sequence is VAGIAAALGGGVLGFTGGKLI. Over 275-301 the chain is Cytoplasmic; the sequence is QRRKQKMMEKLTSSCPDLPSQSDKKRS. A Phosphoserine modification is found at Ser288. The Endoplasmic reticulum retention signal signature appears at 298–301; it reads KKRS.

This sequence belongs to the syntaxin family. In terms of assembly, forms a SNARE complex composed of VAMP8, SNAP29 and STX17 involved in fusion of autophagosome with lysosome. May interact with VTI1B. Probably interacts with BET1, SCFD1 and SEC22B. Interacts with PTPN2 and ABL1; involved in STX17 phosphorylation. Interacts with COPB1. Interacts with TMED9 and TMED10; the interaction is direct. Interacts with VAMP7. Interacts with RUBCNL/PACER; promoting targeting of RUBCNL/PACER to autophagosome. Interacts with VAMP8, SNAP29, VPS39 and VPS41; these interactions are increased in the absence of TMEM39A. Interacts with IRGM; promoting STX17 recruitment to autophagosomes. Interacts with ATG8 proteins GABARAP and MAP1LC3B. Interacts with RNF115; this interaction enhances STX17 stability which in turn promotes autophagosome maturation. Interacts with RAB39A (GTP-bound); the interaction promotes autophagosome-lysosome membrane fusion driven by STX17-SNAP29-VAMP8. Interacts with RAB39B; the interaction may promote a different fonction in autophagy as compared with RAB39A. Dephosphorylation by PTPN2; regulates exit from the endoplasmic reticulum. Phosphorylated at Tyr-156 probably by ABL1.

Its subcellular location is the endoplasmic reticulum membrane. It is found in the smooth endoplasmic reticulum membrane. The protein localises to the endoplasmic reticulum-Golgi intermediate compartment membrane. The protein resides in the cytoplasmic vesicle. It localises to the autophagosome membrane. Its subcellular location is the COPII-coated vesicle membrane. It is found in the cytoplasm. The protein localises to the cytosol. The protein resides in the mitochondrion membrane. It localises to the autolysosome membrane. Functionally, SNAREs, soluble N-ethylmaleimide-sensitive factor-attachment protein receptors, are essential proteins for fusion of cellular membranes. SNAREs localized on opposing membranes assemble to form a trans-SNARE complex, an extended, parallel four alpha-helical bundle that drives membrane fusion. STX17 is a SNARE of the autophagosome involved in autophagy through the direct control of autophagosome membrane fusion with the lysosome membrane. May also play a role in the early secretory pathway where it may maintain the architecture of the endoplasmic reticulum-Golgi intermediate compartment/ERGIC and Golgi and/or regulate transport between the endoplasmic reticulum, the ERGIC and the Golgi. The sequence is that of Syntaxin-17 from Mus musculus (Mouse).